We begin with the raw amino-acid sequence, 81 residues long: Photosystem I iron-sulfur center (81 aa).

2 consecutive 4Fe-4S ferredoxin-type domains span residues 2 to 31 (SHSVKIYDTCIGCTQCVRACPTDVLEMIPW) and 39 to 68 (IASAPRTEDCVGCKRCESACPTDFLSVRVY). [4Fe-4S] cluster contacts are provided by Cys-11, Cys-14, Cys-17, Cys-21, Cys-48, Cys-51, Cys-54, and Cys-58.

As to quaternary structure, the eukaryotic PSI reaction center is composed of at least 11 subunits. The cofactor is [4Fe-4S] cluster.

It localises to the plastid. Its subcellular location is the chloroplast thylakoid membrane. The catalysed reaction is reduced [plastocyanin] + hnu + oxidized [2Fe-2S]-[ferredoxin] = oxidized [plastocyanin] + reduced [2Fe-2S]-[ferredoxin]. Functionally, apoprotein for the two 4Fe-4S centers FA and FB of photosystem I (PSI); essential for photochemical activity. FB is the terminal electron acceptor of PSI, donating electrons to ferredoxin. The C-terminus interacts with PsaA/B/D and helps assemble the protein into the PSI complex. Required for binding of PsaD and PsaE to PSI. PSI is a plastocyanin-ferredoxin oxidoreductase, converting photonic excitation into a charge separation, which transfers an electron from the donor P700 chlorophyll pair to the spectroscopically characterized acceptors A0, A1, FX, FA and FB in turn. This is Photosystem I iron-sulfur center from Sorghum bicolor (Sorghum).